The chain runs to 70 residues: Large ribosomal subunit protein uL29 (70 aa).

The protein belongs to the universal ribosomal protein uL29 family.

This Rickettsia bellii (strain OSU 85-389) protein is Large ribosomal subunit protein uL29.